The chain runs to 2207 residues: DNA polymerase epsilon catalytic subunit A (2207 aa).

Disordered stretches follow at residues 1 to 20 (MPSR…AASF), 1201 to 1233 (SMEK…PFAS), and 1934 to 1961 (RPES…ENEE). Positions 2075, 2078, 2113, and 2116 each coordinate Zn(2+). Residues 2075 to 2116 (CSACCLIRDLDLCRDEDVLPERGSGSGPDSATSSRPWCCPFC) form a CysA-type zinc finger. Residues C2147, C2150, C2162, and C2164 each coordinate [4Fe-4S] cluster. Residues 2147–2164 (CSKCGTLKISEFMEHCSC) carry the CysB motif motif.

This sequence belongs to the DNA polymerase type-B family. As to quaternary structure, heterotetramer. Consists of 4 subunits: pol2, dpb2, dpb3 and dpb4. Requires [4Fe-4S] cluster as cofactor.

It localises to the nucleus. The catalysed reaction is DNA(n) + a 2'-deoxyribonucleoside 5'-triphosphate = DNA(n+1) + diphosphate. DNA polymerase II participates in chromosomal DNA replication. The chain is DNA polymerase epsilon catalytic subunit A (pol2) from Emericella nidulans (strain FGSC A4 / ATCC 38163 / CBS 112.46 / NRRL 194 / M139) (Aspergillus nidulans).